The primary structure comprises 575 residues: uncharacterized protein (575 aa).

The interval 507-536 (AHRKVGELNNKKPMTGEKPPPKNKKSPKYK) is disordered.

This is an uncharacterized protein from Ostreid herpesvirus 1 (isolate France) (OsHV-1).